The sequence spans 504 residues: Multicopper oxidase MmcO (504 aa).

A signal peptide (tat-type signal) is located at residues methionine 1–alanine 44. Cu cation contacts are provided by histidine 120, histidine 122, histidine 161, and histidine 163. Residues glutamate 190–threonine 349 form the Plastocyanin-like domain. Histidine 437, histidine 440, histidine 442, histidine 485, cysteine 486, histidine 487, and histidine 491 together coordinate Cu cation.

This sequence belongs to the multicopper oxidase family. The cofactor is Cu cation. Post-translationally, predicted to be exported by the Tat system. The position of the signal peptide cleavage has not been experimentally proven.

The protein localises to the cell inner membrane. The protein resides in the periplasm. It catalyses the reaction 4 Fe(2+) + O2 + 4 H(+) = 4 Fe(3+) + 2 H2O. Its function is as follows. Required for copper resistance. In vitro, oxidizes organic substrates and Fe(2+). May act in vivo by oxidation of toxic periplasmic Cu(+). The polypeptide is Multicopper oxidase MmcO (Mycobacterium tuberculosis (strain ATCC 25618 / H37Rv)).